The sequence spans 448 residues: Nicotinate phosphoribosyltransferase pncB1 (448 aa).

The segment at 1–21 (MGPPPAARRREGEPDNQDPAG) is disordered. Phosphohistidine is present on His212. Residues 353-372 (RSSYKESPGGRKEALRRSRA) form a disordered region.

This sequence belongs to the NAPRTase family. Transiently phosphorylated on a His residue during the reaction cycle. Phosphorylation strongly increases the affinity for substrates and increases the rate of nicotinate D-ribonucleotide production. Dephosphorylation regenerates the low-affinity form of the enzyme, leading to product release.

The enzyme catalyses nicotinate + 5-phospho-alpha-D-ribose 1-diphosphate + ATP + H2O = nicotinate beta-D-ribonucleotide + ADP + phosphate + diphosphate. Its pathway is cofactor biosynthesis; NAD(+) biosynthesis; nicotinate D-ribonucleotide from nicotinate: step 1/1. Involved in the Preiss-Handler pathway, which is a recycling route that permits the salvage of free nicotinamide (NM) and nicotinic acid (Na) involved in the NAD biosynthesis. Catalyzes the synthesis of beta-nicotinate D-ribonucleotide from nicotinate and 5-phospho-D-ribose 1-phosphate at the expense of ATP. It is not able to use nicotinamide. PncB1 contributes to basal NAD level. In Mycobacterium tuberculosis (strain CDC 1551 / Oshkosh), this protein is Nicotinate phosphoribosyltransferase pncB1 (pncB1).